Consider the following 97-residue polypeptide: MDPKTSVVLPALHLVDPQIQLTTTRMEDAVVHGQNNADLKVYPIILRLGSQLSLSMVRRNLDSLEVRVFQSTPIVVKMTKLATTEELPDEFVVVTAK.

Residues 8–97 form the 9b domain; the sequence is VLPALHLVDP…PDEFVVVTAK (90 aa).

This sequence belongs to the coronavirus group 2 protein 9b family. Homodimer.

It is found in the host cytoplasmic vesicle membrane. It localises to the host cytoplasm. The polypeptide is Protein 9b (Rhinolophus ferrumequinum (Greater horseshoe bat)).